A 763-amino-acid polypeptide reads, in one-letter code: Heat shock 70 kDa protein 16 (763 aa).

Disordered regions lie at residues 509-529 and 701-763; these read ISEE…PSSG and EKTT…MELD. The residue at position 528 (Ser528) is a Phosphoserine. Basic and acidic residues predominate over residues 701 to 714; sequence EKTTEQESLPKDAN.

The protein belongs to the heat shock protein 70 (TC 1.A.33) family. HSP110/SSE subfamily.

This is Heat shock 70 kDa protein 16 (HSP70-16) from Arabidopsis thaliana (Mouse-ear cress).